The following is a 269-amino-acid chain: Protein OPG079 (269 aa).

It belongs to the orthopoxvirus OPG079 family. In terms of assembly, homoomultimer (Potential). Interacts with the small subunit of ribonucleotide reductase. Interacts with host FAM111A; this interaction protomtes OPG079 degradation through autophagy.

It localises to the host cytoplasm. Plays an essential role in viral DNA replication. Binds to ssDNA with high affinity and localizes to cytoplasmic factories where nascent viral genomes accumulate. May disrupt loops, hairpins and other secondary structures present on ssDNA to reduce and eliminate pausing of viral DNA polymerase at specific sites during elongation. The chain is Protein OPG079 (OPG079) from Variola virus (isolate Human/India/Ind3/1967) (VARV).